The sequence spans 159 residues: Phosphopantetheine adenylyltransferase (159 aa).

Residue T9 participates in substrate binding. Residues 9-10 (TF) and H17 each bind ATP. The substrate site is built by K41, L73, and R87. ATP contacts are provided by residues 88-90 (GLR), E98, and 123-129 (YSFISST).

Belongs to the bacterial CoaD family. In terms of assembly, homohexamer. It depends on Mg(2+) as a cofactor.

The protein resides in the cytoplasm. It carries out the reaction (R)-4'-phosphopantetheine + ATP + H(+) = 3'-dephospho-CoA + diphosphate. It participates in cofactor biosynthesis; coenzyme A biosynthesis; CoA from (R)-pantothenate: step 4/5. Reversibly transfers an adenylyl group from ATP to 4'-phosphopantetheine, yielding dephospho-CoA (dPCoA) and pyrophosphate. This chain is Phosphopantetheine adenylyltransferase, found in Pseudomonas fluorescens (strain ATCC BAA-477 / NRRL B-23932 / Pf-5).